Consider the following 370-residue polypeptide: Uroporphyrinogen decarboxylase (370 aa).

Substrate contacts are provided by residues 29-33 (RQAGR), aspartate 79, tyrosine 155, serine 210, and histidine 342.

It belongs to the uroporphyrinogen decarboxylase family. In terms of assembly, homodimer.

Its subcellular location is the cytoplasm. It catalyses the reaction uroporphyrinogen III + 4 H(+) = coproporphyrinogen III + 4 CO2. It functions in the pathway porphyrin-containing compound metabolism; protoporphyrin-IX biosynthesis; coproporphyrinogen-III from 5-aminolevulinate: step 4/4. In terms of biological role, catalyzes the decarboxylation of four acetate groups of uroporphyrinogen-III to yield coproporphyrinogen-III. The polypeptide is Uroporphyrinogen decarboxylase (Verminephrobacter eiseniae (strain EF01-2)).